We begin with the raw amino-acid sequence, 362 residues long: Erythritol/L-threitol dehydrogenase (362 aa).

Zn(2+) contacts are provided by Cys45, His76, Glu77, Cys109, Cys112, Cys115, and Cys123. Residues Ile195 and Asp215 each coordinate NAD(+).

Belongs to the zinc-containing alcohol dehydrogenase family. Requires Zn(2+) as cofactor.

The enzyme catalyses erythritol + NAD(+) = D-erythrulose + NADH + H(+). The catalysed reaction is L-threitol + NAD(+) = L-erythrulose + NADH + H(+). It functions in the pathway carbohydrate metabolism; erythritol degradation. Its pathway is carbohydrate metabolism; L-threitol degradation. Its function is as follows. Catalyzes the NAD-dependent reversible oxidation of erythritol and L-threitol. Involved in the degradation pathways of erythritol and L-threitol, that allow M.smegmatis to grow on these compounds as the sole carbon source. The chain is Erythritol/L-threitol dehydrogenase from Mycolicibacterium smegmatis (strain ATCC 700084 / mc(2)155) (Mycobacterium smegmatis).